A 221-amino-acid polypeptide reads, in one-letter code: Histone H1C (221 aa).

2 disordered regions span residues 1-43 and 113-221; these read MSDP…PPVS and AAKK…AKKA. One can recognise an H15 domain in the interval 38–112; the sequence is THPPVSEMVF…GALGSFKLPA (75 aa). Composition is skewed to basic residues over residues 141-167 and 175-221; these read KVKKTIAKKPKAATATKIKKPVAKTTK and AAKK…AKKA.

It belongs to the histone H1/H5 family.

The protein resides in the nucleus. The protein localises to the chromosome. Histones H1 are necessary for the condensation of nucleosome chains into higher-order structures. The sequence is that of Histone H1C from Chironomus tentans (Midge).